Here is a 213-residue protein sequence, read N- to C-terminus: Large ribosomal subunit protein uL1 (213 aa).

This sequence belongs to the universal ribosomal protein uL1 family. In terms of assembly, part of the 50S ribosomal subunit.

Functionally, binds directly to 23S rRNA. Probably involved in E site tRNA release. In terms of biological role, protein L1 is also a translational repressor protein, it controls the translation of its operon by binding to its mRNA. In Methanococcoides burtonii (strain DSM 6242 / NBRC 107633 / OCM 468 / ACE-M), this protein is Large ribosomal subunit protein uL1.